A 159-amino-acid chain; its full sequence is Urease accessory protein UreE (159 aa).

The protein belongs to the UreE family.

The protein localises to the cytoplasm. Functionally, involved in urease metallocenter assembly. Binds nickel. Probably functions as a nickel donor during metallocenter assembly. The protein is Urease accessory protein UreE of Acinetobacter baylyi (strain ATCC 33305 / BD413 / ADP1).